The following is a 211-amino-acid chain: Transcription factor ces-2 (211 aa).

Low complexity predominate over residues 83 to 101; it reads VSSRSSTVSSSHFSSPQRS. Disordered regions lie at residues 83-152 and 184-211; these read VSSR…HALE and NSEV…TIEV. Basic and acidic residues predominate over residues 111–152; it reads PEEKKDSAYFERRRKNNDAAKRSRDARRQKEEQIASKAHALE. One can recognise a bZIP domain in the interval 116–179; sequence DSAYFERRRK…AQLRFLLFSK (64 aa). The tract at residues 122 to 140 is basic motif; sequence RRRKNNDAAKRSRDARRQK. Positions 144 to 172 are leucine-zipper; sequence IASKAHALERENMQLRGKVSSLEQEAAQL. Positions 190–200 are enriched in low complexity; the sequence is ESNDSTETNDS. Positions 201-211 are enriched in basic and acidic residues; it reads NDSKSDSTIEV.

This sequence belongs to the bZIP family. As to quaternary structure, interacts with NFIL3 transcription factor homolog atf-2.

Its subcellular location is the nucleus. Its function is as follows. Transcription factor. Required to activate programmed cell death in the sister cells of the serotoninergic neurosecretory motor (NSM) neurons. Negatively regulates the activity of ces-1 which in turn negatively regulates the activities of cell-killing genes. Binds to the DNA sequence 5'-RTTACGTAAY-3'. Involved in the development of the excretory duct cell, by positively modulating embryonic transcription of putative transcription factor lin-48, acting in concert with NFIL3 transcription factor homolog atf-2. Positively modulates expression of neuropeptide pigment dispersing factor homologs pdf-1 and pdf-2. The polypeptide is Transcription factor ces-2 (ces-2) (Caenorhabditis elegans).